Reading from the N-terminus, the 996-residue chain is Leucine-rich repeat receptor-like kinase protein THICK TASSEL DWARF1 (996 aa).

The first 26 residues, M1–A26, serve as a signal peptide directing secretion. 21 LRR repeats span residues T78–L103, D104–M127, P128–A151, F153–A178, S180–D201, L202–L226, L251–L275, S276–L299, T300–L323, N325–F349, E351–N371, G372–G395, N397–C419, K420–L443, Q445–G466, D467–L490, P491–L514, N516–C538, A539–L562, K563–M586, and T587–V611. The helical transmembrane segment at K646–A666 threads the bilayer. A Protein kinase domain is found at L703–S978. ATP is bound by residues I709–V717 and K731. D828 serves as the catalytic Proton acceptor.

Belongs to the protein kinase superfamily. Ser/Thr protein kinase family. As to expression, highly expressed in the apex of the vegetative seedlings. Lower expression in young leaves, ears and tassels, embryos and roots. Not expressed in the shoot meristem itself. Detected in the three outermost layers of the inflorescence meristem, and on its flanks at positions of prospective spikelet pair meristems. Not confined to meristematic cells but also detected in primordia of glumes, lemmas and stamens.

It is found in the membrane. It carries out the reaction L-seryl-[protein] + ATP = O-phospho-L-seryl-[protein] + ADP + H(+). The catalysed reaction is L-threonyl-[protein] + ATP = O-phospho-L-threonyl-[protein] + ADP + H(+). Receptor-like kinase protein that regulates meristem size during inflorescence and flower development. Promotes vegetative meristem growth and restricts inflorescence and floral meristem growth. Based on additive and synergistic phenotypes of double mutants, it is probable that unlike CLV1 and CLV2 in A.thaliana, TD1 and FAE2 do not function exclusively in a single pathway. However, KN-1 and TD1 do function in a linear pathway to maintain vegetative meristem homeostasis, but they may interact with different partners during development. The chain is Leucine-rich repeat receptor-like kinase protein THICK TASSEL DWARF1 (TD1) from Zea mays (Maize).